A 509-amino-acid chain; its full sequence is 2,3-bisphosphoglycerate-independent phosphoglycerate mutase (509 aa).

Positions 13 and 63 each coordinate Mn(2+). The active-site Phosphoserine intermediate is the serine 63. Substrate-binding positions include histidine 124, 154-155, arginine 186, arginine 192, 261-264, and lysine 335; these read RD and RPDR. Residues aspartate 400, histidine 404, aspartate 441, histidine 442, and histidine 459 each coordinate Mn(2+).

Belongs to the BPG-independent phosphoglycerate mutase family. Monomer. The cofactor is Mn(2+).

The enzyme catalyses (2R)-2-phosphoglycerate = (2R)-3-phosphoglycerate. It participates in carbohydrate degradation; glycolysis; pyruvate from D-glyceraldehyde 3-phosphate: step 3/5. Its function is as follows. Catalyzes the interconversion of 2-phosphoglycerate and 3-phosphoglycerate. This chain is 2,3-bisphosphoglycerate-independent phosphoglycerate mutase, found in Desulforudis audaxviator (strain MP104C).